Reading from the N-terminus, the 99-residue chain is Pyruvate synthase subunit PorD (99 aa).

2 consecutive 4Fe-4S ferredoxin-type domains span residues 32–60 and 61–91; these read MRPILHKEKCIDCMFCWLYCPDQAIIQEG and GIMKGFNYDYCKGCGLCANVCPKQAIEMRPE. [4Fe-4S] cluster-binding residues include cysteine 41, cysteine 44, cysteine 47, cysteine 51, cysteine 71, cysteine 74, cysteine 77, and cysteine 81.

As to quaternary structure, heterotetramer of one alpha, one beta, one delta and one gamma chain. [4Fe-4S] cluster is required as a cofactor.

This chain is Pyruvate synthase subunit PorD (porD), found in Thermotoga maritima (strain ATCC 43589 / DSM 3109 / JCM 10099 / NBRC 100826 / MSB8).